A 436-amino-acid polypeptide reads, in one-letter code: GTPase Obg (436 aa).

An Obg domain is found at 1–159 (MAFVDQATIE…LKVKLELRVL (159 aa)). The OBG-type G domain occupies 160 to 335 (ADVGLVGFPS…LLLKVADLLD (176 aa)). Residues 166-173 (GFPSAGKS), 191-195 (FTTID), 213-216 (DLPG), 285-288 (TKMD), and 316-318 (SSV) contribute to the GTP site. Serine 173 and threonine 193 together coordinate Mg(2+). The OCT domain maps to 357–436 (KDDHQSTDFQ…GADFAFEFEE (80 aa)).

This sequence belongs to the TRAFAC class OBG-HflX-like GTPase superfamily. OBG GTPase family. As to quaternary structure, monomer. Mg(2+) serves as cofactor.

It is found in the cytoplasm. An essential GTPase which binds GTP, GDP and possibly (p)ppGpp with moderate affinity, with high nucleotide exchange rates and a fairly low GTP hydrolysis rate. Plays a role in control of the cell cycle, stress response, ribosome biogenesis and in those bacteria that undergo differentiation, in morphogenesis control. This is GTPase Obg from Oenococcus oeni (strain ATCC BAA-331 / PSU-1).